Consider the following 55-residue polypeptide: Large ribosomal subunit protein bL33A (55 aa).

Belongs to the bacterial ribosomal protein bL33 family.

The chain is Large ribosomal subunit protein bL33A from Salinispora tropica (strain ATCC BAA-916 / DSM 44818 / JCM 13857 / NBRC 105044 / CNB-440).